A 275-amino-acid chain; its full sequence is tRNA uridine(34) hydroxylase (275 aa).

The Rhodanese domain occupies 121-214; sequence SQPDVLVIDT…YLEKTYNKNG (94 aa). Residue C174 is the Cysteine persulfide intermediate of the active site.

The protein belongs to the TrhO family.

The enzyme catalyses uridine(34) in tRNA + AH2 + O2 = 5-hydroxyuridine(34) in tRNA + A + H2O. Catalyzes oxygen-dependent 5-hydroxyuridine (ho5U) modification at position 34 in tRNAs. The protein is tRNA uridine(34) hydroxylase of Wolbachia pipientis wMel.